The primary structure comprises 197 residues: Recombination protein RecR (197 aa).

A C4-type zinc finger spans residues 55 to 70; it reads CVQCRDFTESEICTIC. In terms of domain architecture, Toprim spans 78–173; that stretch reads QQLCVVESPA…RPSRLAQGMP (96 aa).

It belongs to the RecR family.

Its function is as follows. May play a role in DNA repair. It seems to be involved in an RecBC-independent recombinational process of DNA repair. It may act with RecF and RecO. This chain is Recombination protein RecR, found in Xanthomonas euvesicatoria pv. vesicatoria (strain 85-10) (Xanthomonas campestris pv. vesicatoria).